The following is a 488-amino-acid chain: MNTQLINNQWQAGQGPAFASINPSNGETIWQGNGASAEQVNSAIKAARAAQLQWADTPLEQRITILENFAAQLKEHSEEFAVIIAQETGKPLWETRTEVGAMTGKVAISVKAYNERTGTTENPMPGAKAFIRHKPHGVVAIFGPYNFPGHLPNGHIVPAILAGNTVVFKPSELTPHVAQFTLSLWLKAGLPAGVINLVQGEIETGKALAAHQDIDGLFFTGSSNTGHLLHKQFAGHPGKILALEMGGNNPLIIKDVNDVSAAVHDIIQSGFITSGQRCTCARRVFIENSSNGDAILAKLISATKNIVVDDSFATEQPFMGAMISEKAALGMVAAQNELVAKGAEVLVELKQLKPGTGFVSPGIIDVTNVNDMPDEEHFGPLIKIYRYSDFDSAINEANNTSFGLSAGLLADSENDYNHFLKRIRAGIVNWNRPITGASSAAPFGGIGASGNHRASAYYAADYCAYPVASVESDKVTLPQTLAPGLIIE.

221 to 226 (GSSNTG) lines the NAD(+) pocket. Active-site residues include glutamate 244 and cysteine 278.

The protein belongs to the aldehyde dehydrogenase family. AstD subfamily.

The enzyme catalyses N-succinyl-L-glutamate 5-semialdehyde + NAD(+) + H2O = N-succinyl-L-glutamate + NADH + 2 H(+). Its pathway is amino-acid degradation; L-arginine degradation via AST pathway; L-glutamate and succinate from L-arginine: step 4/5. Catalyzes the NAD-dependent reduction of succinylglutamate semialdehyde into succinylglutamate. In Pseudoalteromonas translucida (strain TAC 125), this protein is N-succinylglutamate 5-semialdehyde dehydrogenase 2.